We begin with the raw amino-acid sequence, 172 residues long: Large ribosomal subunit protein bL17m (172 aa).

Residues 1–8 (MRLSFAAA) constitute a mitochondrion transit peptide.

The protein belongs to the bacterial ribosomal protein bL17 family. In terms of assembly, component of the mitochondrial ribosome large subunit (39S) which comprises a 16S rRNA and about 50 distinct proteins.

The protein localises to the mitochondrion. This is Large ribosomal subunit protein bL17m (MRPL17) from Bos taurus (Bovine).